The primary structure comprises 378 residues: Outer membrane protein (378 aa).

Residues 1–22 (MRLRTALLATTLMAAAPVAANA) form the signal peptide. The region spanning 258-378 (PPAPTPARTY…QNRRVEIILH (121 aa)) is the OmpA-like domain.

It is found in the cell outer membrane. Its function is as follows. Growth enhancer. In Gluconacetobacter diazotrophicus (strain ATCC 49037 / DSM 5601 / CCUG 37298 / CIP 103539 / LMG 7603 / PAl5), this protein is Outer membrane protein.